A 186-amino-acid polypeptide reads, in one-letter code: Casparian strip membrane protein 6 (186 aa).

The Cytoplasmic portion of the chain corresponds to 1-23 (MKAGPIELGEGKSSAPKAAVNRG). Residues 24-44 (VAILDFILRILAFIGTLGSAI) form a helical membrane-spanning segment. The Extracellular portion of the chain corresponds to 45–73 (SMATTNETLPFFTQFIRFRAEYDDLPTFT). The N-linked (GlcNAc...) asparagine glycan is linked to asparagine 50. A helical membrane pass occupies residues 74–94 (FFVVANGVVSAYLLFSLPFSI). Over 95-106 (FNIVRSKAQNSR) the chain is Cytoplasmic. A helical membrane pass occupies residues 107–127 (ILLIILDTAMLGLLSAGASAA). The Extracellular segment spans residues 128-160 (AAIVYLAHQGNVRTNWSAICQQFNSFCERISGS). Asparagine 142 is a glycosylation site (N-linked (GlcNAc...) asparagine). Residues 161–181 (LIGSFIGVVVFILLISLSAVA) traverse the membrane as a helical segment. At 182–186 (LSRHK) the chain is on the cytoplasmic side.

This sequence belongs to the Casparian strip membrane proteins (CASP) family. Homodimer and heterodimers.

Its subcellular location is the cell membrane. In terms of biological role, regulates membrane-cell wall junctions and localized cell wall deposition. Required for establishment of the Casparian strip membrane domain (CSD) and the subsequent formation of Casparian strips, a cell wall modification of the root endodermis that determines an apoplastic barrier between the intraorganismal apoplasm and the extraorganismal apoplasm and prevents lateral diffusion. This Populus trichocarpa (Western balsam poplar) protein is Casparian strip membrane protein 6.